The following is a 461-amino-acid chain: Probable tubulin polyglutamylase TTLL9 (461 aa).

Residues 1–10 are compositionally biased toward polar residues; sequence MSRQKNQNSK. The tract at residues 1–20 is disordered; the sequence is MSRQKNQNSKGHGVSKGKER. Positions 22-402 constitute a TTL domain; that stretch reads QRTLIRFKTT…EARLTGKEKR (381 aa). ATP contacts are provided by residues lysine 149 and 155 to 156; that span reads QG. An a protein-binding site is contributed by glutamine 155. The disordered stretch occupies residues 172–208; the sequence is RKGTSGKKPTGVETQPARANMNPSGSHDTRSSDDQKD. Over residues 198 to 208 the composition is skewed to basic and acidic residues; that stretch reads HDTRSSDDQKD. Residues 218–221 and 231–233 contribute to the ATP site; these read QRYV and KFD. Residue arginine 257 participates in L-glutamate binding. 276-277 provides a ligand contact to ATP; that stretch reads TN. Lysine 294 is a binding site for L-glutamate. The Mg(2+) site is built by aspartate 348, glutamate 361, and asparagine 363. Lysine 379 is an L-glutamate binding site.

Belongs to the tubulin--tyrosine ligase family. It depends on Mg(2+) as a cofactor. As to expression, highly expressed in brain and testis. Expressed in heart, kidney and lung. In the brain, expressed in ependymal cilia, cortex, corpus callosum and striatum. In the testis, specifically expressed in the seminiferous tubules.

It is found in the cytoplasm. It localises to the cytoskeleton. The protein resides in the cilium basal body. Its subcellular location is the flagellum axoneme. The catalysed reaction is (L-glutamyl)(n)-gamma-L-glutamyl-L-glutamyl-[protein] + L-glutamate + ATP = (L-glutamyl)(n+1)-gamma-L-glutamyl-L-glutamyl-[protein] + ADP + phosphate + H(+). In terms of biological role, probable tubulin polyglutamylase that generates side chains of glutamate on the gamma-carboxyl group of specific glutamate residues within the C-terminal tail of target proteins. Similar to TTLL1, may acquire enzymatic activity only in complex with other proteins as it is most likely lacking domains important for autonomous activity. Mediates tubulin polyglutamylation which induces establishment of microtubule heterogeneity in sperm flagella, thereby playing a role in normal motile flagella axoneme structure and sperm flagella beating pattern. The polypeptide is Probable tubulin polyglutamylase TTLL9 (Mus musculus (Mouse)).